Here is a 158-residue protein sequence, read N- to C-terminus: ATP synthase subunit delta (158 aa).

This sequence belongs to the ATPase delta chain family. In terms of assembly, F-type ATPases have 2 components, F(1) - the catalytic core - and F(0) - the membrane proton channel. F(1) has five subunits: alpha(3), beta(3), gamma(1), delta(1), epsilon(1). F(0) has three main subunits: a(1), b(2) and c(10-14). The alpha and beta chains form an alternating ring which encloses part of the gamma chain. F(1) is attached to F(0) by a central stalk formed by the gamma and epsilon chains, while a peripheral stalk is formed by the delta and b chains.

It localises to the cell membrane. F(1)F(0) ATP synthase produces ATP from ADP in the presence of a proton or sodium gradient. F-type ATPases consist of two structural domains, F(1) containing the extramembraneous catalytic core and F(0) containing the membrane proton channel, linked together by a central stalk and a peripheral stalk. During catalysis, ATP synthesis in the catalytic domain of F(1) is coupled via a rotary mechanism of the central stalk subunits to proton translocation. Functionally, this protein is part of the stalk that links CF(0) to CF(1). It either transmits conformational changes from CF(0) to CF(1) or is implicated in proton conduction. The polypeptide is ATP synthase subunit delta (Roseiflexus castenholzii (strain DSM 13941 / HLO8)).